The primary structure comprises 183 residues: ATP-dependent protease subunit HslV (183 aa).

The active site involves Thr-12. Na(+) contacts are provided by Ala-166, Cys-169, and Thr-172.

It belongs to the peptidase T1B family. HslV subfamily. As to quaternary structure, a double ring-shaped homohexamer of HslV is capped on each side by a ring-shaped HslU homohexamer. The assembly of the HslU/HslV complex is dependent on binding of ATP.

Its subcellular location is the cytoplasm. It carries out the reaction ATP-dependent cleavage of peptide bonds with broad specificity.. Its activity is regulated as follows. Allosterically activated by HslU binding. In terms of biological role, protease subunit of a proteasome-like degradation complex believed to be a general protein degrading machinery. The chain is ATP-dependent protease subunit HslV from Afipia carboxidovorans (strain ATCC 49405 / DSM 1227 / KCTC 32145 / OM5) (Oligotropha carboxidovorans).